The chain runs to 449 residues: Procollagen C-endopeptidase enhancer 1 (449 aa).

The first 25 residues, Met-1–Gly-25, serve as a signal peptide directing secretion. N-linked (GlcNAc...) asparagine glycosylation occurs at Asn-29. Cystine bridges form between Cys-37-Cys-63, Cys-90-Cys-112, Cys-159-Cys-186, Cys-213-Cys-236, Cys-318-Cys-386, Cys-322-Cys-389, and Cys-333-Cys-437. CUB domains are found at residues Cys-37–Arg-149 and Cys-159–Leu-273. The residue at position 50 (Ser-50) is a Phosphoserine. The segment at Lys-271–Gln-321 is disordered. One can recognise an NTR domain in the interval Cys-318–Cys-437. N-linked (GlcNAc...) asparagine glycosylation is present at Asn-431.

As to quaternary structure, interacts with EFEMP2. Post-translationally, C-terminally processed at multiple positions.

It is found in the secreted. Its function is as follows. Binds to the C-terminal propeptide of type I procollagen and enhances procollagen C-proteinase activity. In terms of biological role, C-terminal processed part of PCPE (CT-PCPE) may have an metalloproteinase inhibitory activity. The polypeptide is Procollagen C-endopeptidase enhancer 1 (PCOLCE) (Homo sapiens (Human)).